We begin with the raw amino-acid sequence, 294 residues long: UPF0761 membrane protein YPK_4186 (294 aa).

Helical transmembrane passes span 44–64 (LLSLVPLITVIFALFAAFPMF), 67–87 (ISIKLKAFIFANFMPATGDII), 108–128 (GLIVTALLLIYSVDSVLNIIW), 136–156 (LVFSFAVYWMVLTLGPILVGA), 185–205 (VFPLLISWVSFWLLYSVVPTV), 212–232 (ALIGALVAALLFELGKKGFAM), and 246–266 (VLAVIPILFLWVYWSWCIVLL).

This sequence belongs to the UPF0761 family.

It is found in the cell inner membrane. The chain is UPF0761 membrane protein YPK_4186 from Yersinia pseudotuberculosis serotype O:3 (strain YPIII).